We begin with the raw amino-acid sequence, 101 residues long: Small ribosomal subunit protein uS14 (101 aa).

Residues M1–N10 are compositionally biased toward basic and acidic residues. The tract at residues M1–K23 is disordered. The span at N11–K23 shows a compositional bias: basic residues.

In terms of assembly, part of the 30S ribosomal subunit. Contacts proteins S3 and S10.

Binds 16S rRNA, required for the assembly of 30S particles and may also be responsible for determining the conformation of the 16S rRNA at the A site. This Rhodopseudomonas palustris (strain ATCC BAA-98 / CGA009) protein is Small ribosomal subunit protein uS14.